A 364-amino-acid polypeptide reads, in one-letter code: Caffeic acid 3-O-methyltransferase 2 (364 aa).

129–135 (MNQDKVL) contacts substrate. The segment at 161–179 (AFEYHGTDPRFNKVFNKGM) is substrate binding. S-adenosyl-L-methionine-binding residues include Gly207, Asp230, Asp250, Met251, and Lys264. His268 functions as the Proton acceptor in the catalytic mechanism.

Belongs to the class I-like SAM-binding methyltransferase superfamily. Cation-independent O-methyltransferase family. COMT subfamily. In terms of assembly, homodimer.

It carries out the reaction (E)-caffeate + S-adenosyl-L-methionine = (E)-ferulate + S-adenosyl-L-homocysteine + H(+). Its pathway is aromatic compound metabolism; phenylpropanoid biosynthesis. In terms of biological role, catalyzes the conversion of caffeic acid to ferulic acid and of 5-hydroxyferulic acid to sinapic acid. The resulting products may subsequently be converted to the corresponding alcohols that are incorporated into lignins. This chain is Caffeic acid 3-O-methyltransferase 2 (OMT2), found in Populus tremuloides (Quaking aspen).